Consider the following 561-residue polypeptide: Potassium-transporting ATPase potassium-binding subunit (561 aa).

12 helical membrane passes run 2–22 (GQGLLQIGLTLCIVIAITPVL), 66–86 (IRAILYTNLFMGILVYSLIYF), 135–155 (ALGFLMFTSAATGLAVGIAFI), 177–197 (ILLPISVIGAIALVLLGVPQT), 253–273 (LIETIAMIAIPAAMIYTYGVF), 280–300 (AWLLFWMVFIVFVILVWVAAG), 327–347 (FGWAETALWAVMTTATMCGAV), 354–374 (LMPQGLFATLFNLFLQIIWGG), 378–398 (GTAYLFIYLILTVFLTGLMVG), 413–433 (IVLASLILLIHPIVVLIPSAI), 482–502 (LSTSLSILTGRYVPIIAMLLL), and 531–551 (AGIVLILGVLTFFPVLALGPI).

Belongs to the KdpA family. The system is composed of three essential subunits: KdpA, KdpB and KdpC.

The protein resides in the cell inner membrane. Its function is as follows. Part of the high-affinity ATP-driven potassium transport (or Kdp) system, which catalyzes the hydrolysis of ATP coupled with the electrogenic transport of potassium into the cytoplasm. This subunit binds the periplasmic potassium ions and delivers the ions to the membrane domain of KdpB through an intramembrane tunnel. The chain is Potassium-transporting ATPase potassium-binding subunit from Nostoc sp. (strain PCC 7120 / SAG 25.82 / UTEX 2576).